A 991-amino-acid polypeptide reads, in one-letter code: Nonsense-mediated mRNA decay factor SMG8 (991 aa).

Disordered stretches follow at residues alanine 16–proline 41, histidine 82–arginine 127, and proline 279–arginine 299. The segment covering glutamate 95–alanine 110 has biased composition (low complexity). Phosphoserine is present on serine 115. Positions proline 279 to aspartate 289 are enriched in basic and acidic residues. Residues lysine 290–arginine 299 show a composition bias toward basic residues. Phosphoserine occurs at positions 469 and 668. Residues phenylalanine 653–valine 722 are disordered. The span at aspartate 675 to proline 684 shows a compositional bias: basic and acidic residues. Residues glutamine 685–leucine 706 show a composition bias toward polar residues. 2 positions are modified to phosphoserine: serine 742 and serine 895. Arginine 898 is modified (omega-N-methylarginine).

Belongs to the SMG8 family. In terms of assembly, component of the SMG1C complex composed of SMG1, SMG8 and SMG9; the recruitment of SMG8 to SMG1 N-terminus induces a large conformational change in the SMG1 C-terminal head domain containing the catalytic domain. Forms heterodimers with SMG9; this assembly form may represent a SMG1C intermediate form. In terms of processing, phosphorylated by SMG1.

Functionally, involved in nonsense-mediated decay (NMD) of mRNAs containing premature stop codons. Is recruited by release factors to stalled ribosomes together with SMG1 and SMG9 (forming the SMG1C protein kinase complex) and, in the SMG1C complex, is required to mediate the recruitment of SMG1 to the ribosome:SURF complex and to suppress SMG1 kinase activity until the ribosome:SURF complex locates the exon junction complex (EJC). Acts as a regulator of kinase activity. This chain is Nonsense-mediated mRNA decay factor SMG8 (SMG8), found in Homo sapiens (Human).